The chain runs to 469 residues: Diaminopimelate decarboxylase (469 aa).

Residues 1–23 (MLSTEMPLPTTGSTLLKTPASPS) are disordered. Position 93 is an N6-(pyridoxal phosphate)lysine (lysine 93). Residues glycine 279 and 321–324 (EPGR) contribute to the pyridoxal 5'-phosphate site. Residues arginine 324, arginine 361, and tyrosine 365 each contribute to the substrate site. Catalysis depends on cysteine 392, which acts as the Proton donor. Residues glutamate 393 and tyrosine 421 each coordinate substrate. Tyrosine 421 provides a ligand contact to pyridoxal 5'-phosphate.

It belongs to the Orn/Lys/Arg decarboxylase class-II family. LysA subfamily. In terms of assembly, homodimer. Pyridoxal 5'-phosphate is required as a cofactor.

The catalysed reaction is meso-2,6-diaminopimelate + H(+) = L-lysine + CO2. It participates in amino-acid biosynthesis; L-lysine biosynthesis via DAP pathway; L-lysine from DL-2,6-diaminopimelate: step 1/1. In terms of biological role, specifically catalyzes the decarboxylation of meso-diaminopimelate (meso-DAP) to L-lysine. This Synechocystis sp. (strain ATCC 27184 / PCC 6803 / Kazusa) protein is Diaminopimelate decarboxylase.